Here is a 377-residue protein sequence, read N- to C-terminus: Putative efflux system component YknX (377 aa).

A helical membrane pass occupies residues 3–23; the sequence is KVWIGIGIAVIVALFVGINIY. A coiled-coil region spans residues 95–187; that stretch reads TNEQLSLEKE…RVSDLEVKSE (93 aa).

It belongs to the membrane fusion protein (MFP) (TC 8.A.1) family. Part of a complex composed of YknX, YknY and YknZ. The complex interacts with YknW.

Its subcellular location is the cell membrane. Its function is as follows. Part of an unusual four-component transporter, which is required for protection against the killing factor SdpC (sporulation-delaying protein). This chain is Putative efflux system component YknX (yknX), found in Bacillus subtilis (strain 168).